A 280-amino-acid chain; its full sequence is Cis-2,3-dihydrobiphenyl-2,3-diol dehydrogenase (280 aa).

9–33 lines the NAD(+) pocket; the sequence is LVTGGCAGLGRAIVDRFVCEGARVA. A substrate-binding site is contributed by Ser142. Tyr155 serves as the catalytic Proton acceptor.

This sequence belongs to the short-chain dehydrogenases/reductases (SDR) family.

The catalysed reaction is (2R,3S)-3-phenylcyclohexa-3,5-diene-1,2-diol + NAD(+) = biphenyl-2,3-diol + NADH + H(+). It participates in xenobiotic degradation; biphenyl degradation; 2-hydroxy-2,4-pentadienoate and benzoate from biphenyl: step 2/4. This is Cis-2,3-dihydrobiphenyl-2,3-diol dehydrogenase (bphB) from Rhodococcus globerulus.